The chain runs to 492 residues: Zinc finger protein 385B (492 aa).

2 Matrin-type zinc fingers span residues 8 to 44 and 143 to 173; these read KKLL…VKQL and ISCN…KLKA. Residues 159–206 form a disordered region; it reads EAHYKGSKHAKKLKAQESPKNKQKSAVAQDSGTKTITSTSTNTTTTTT. Low complexity predominate over residues 189–206; the sequence is SGTKTITSTSTNTTTTTT. 2 consecutive Matrin-type zinc fingers follow at residues 303–337 and 371–401; these read KKLL…LEAR and FHCE…RVAG. The disordered stretch occupies residues 388-420; it reads QHISSRRHKDRVAGKPTKPKYSPYNKQQRSSSS.

It localises to the nucleus. May play a role in p53/TP53-mediated apoptosis. The polypeptide is Zinc finger protein 385B (znf385b) (Danio rerio (Zebrafish)).